The following is a 1945-amino-acid chain: Rho GTPase-activating protein 21 (1945 aa).

Residues 26–53 (CEVSKNKDGKDQGEPVSPSEDEPFSWPG) are disordered. Residues 29 to 38 (SKNKDGKDQG) show a composition bias toward basic and acidic residues. Residues Ser-42 and Ser-63 each carry the phosphoserine modification. The PDZ domain occupies 56–165 (TVMLKRTSQG…TLELSVMPKD (110 aa)). Disordered stretches follow at residues 210-229 (TAQP…QQTS) and 326-365 (HQTT…DSPP). The span at 347–358 (SGHSEGISSSRS) shows a compositional bias: low complexity. Position 454 is a phosphoserine (Ser-454). A compositionally biased stretch (polar residues) spans 499–512 (EATATVNSESQIPD). Residues 499-519 (EATATVNSESQIPDSNGERKQ) form a disordered region. Arg-549 and Arg-569 each carry omega-N-methylarginine. Disordered stretches follow at residues 573 to 647 (PVSQ…RPVN) and 674 to 702 (EVSS…LELP). Polar residues predominate over residues 589–600 (SNRNFPTTTGVS). Phosphoserine occurs at positions 610 and 619. The segment covering 674–696 (EVSSCLPGTSAKTSPQLSENLGT) has biased composition (polar residues). Thr-741 is subject to Phosphothreonine. 3 positions are modified to phosphoserine: Ser-851, Ser-856, and Ser-875. 2 disordered regions span residues 852 to 879 (HDQE…YDEG) and 902 to 921 (ITDS…SSSE). The span at 866-879 (HSSKTERSKSYDEG) shows a compositional bias: basic and acidic residues. Tyr-876 carries the post-translational modification Phosphotyrosine. Phosphoserine occurs at positions 918, 920, 948, 1093, and 1109. An interaction with ARF1 and ARF6 region spans residues 924–1091 (SDAAREGWLQ…AKSEPKTQSP (168 aa)). One can recognise a PH domain in the interval 925–1034 (DAAREGWLQF…WIKTIQESSN (110 aa)). Residues 1080–1120 (LGAKSEPKTQSPHSPKEESERKLLSKDDTSPPKDKGTWRRG) form a disordered region. Residues 1093-1116 (SPKEESERKLLSKDDTSPPKDKGT) show a composition bias toward basic and acidic residues. Residues 1141–1333 (VRLDDCPPAH…TLIQHHDWFF (193 aa)) enclose the Rho-GAP domain. 4 disordered regions span residues 1373–1396 (PGDV…SGKD), 1412–1632 (SRKR…PVFP), 1649–1794 (ARVS…LGGH), and 1846–1945 (RTSA…ETPP). Residues 1377-1395 (SDSATSDSAKSKGSWGSGK) are compositionally biased toward low complexity. Residues Ser-1412, Ser-1426, and Ser-1427 each carry the phosphoserine modification. Composition is skewed to basic and acidic residues over residues 1435-1457 (FFKK…RESE) and 1471-1488 (SNTK…KIPW). A Glycyl lysine isopeptide (Lys-Gly) (interchain with G-Cter in SUMO) cross-link involves residue Lys-1438. Thr-1504 is subject to Phosphothreonine. Low complexity-rich tracts occupy residues 1531 to 1556 (SDSG…STSP) and 1569 to 1589 (TTTS…LDSS). The tract at residues 1579–1848 (STTYLTSLDS…WLARERVRTS (270 aa)) is interaction with CTNNA1. Over residues 1590 to 1599 (RLSPEVQSVA) the composition is skewed to polar residues. A compositionally biased stretch (basic and acidic residues) spans 1611 to 1621 (SELVSEGRPVE). Ser-1656 carries the post-translational modification Phosphoserine. Composition is skewed to polar residues over residues 1658–1681 (GSEA…QFSS) and 1729–1738 (STGSLLTPSR). Thr-1669 carries the post-translational modification Phosphothreonine. Ser-1729 carries the phosphoserine modification. Basic and acidic residues predominate over residues 1739-1757 (SESEKQEATWKTKIADRLK). The span at 1782 to 1792 (RKNIKRRHTLG) shows a compositional bias: basic residues. A compositionally biased stretch (polar residues) spans 1871 to 1882 (PISTHSPPSQQP). Residues 1887–1896 (AATSTLASTS) are compositionally biased toward low complexity. At Thr-1902 the chain carries Phosphothreonine. The residue at position 1906 (Ser-1906) is a Phosphoserine. The span at 1907-1927 (PDQINRESFQNMSQNASSTAN) shows a compositional bias: polar residues. A compositionally biased stretch (basic and acidic residues) spans 1932–1945 (KQSESPDTKAETPP).

In terms of assembly, interacts with CTNNA1. Interacts with GTP-bound ARF1 and probably ARF6. Post-translationally, sumoylated with SUMO2 and SUMO3 in proliferating lymphocytes.

Its subcellular location is the golgi apparatus membrane. It is found in the cell junction. The protein localises to the cytoplasmic vesicle membrane. It localises to the cytoplasm. The protein resides in the cytoskeleton. Its function is as follows. Functions as a GTPase-activating protein (GAP) for RHOA and CDC42. Downstream partner of ARF1 which may control Golgi apparatus structure and function. Also required for CTNNA1 recruitment to adherens junctions. The protein is Rho GTPase-activating protein 21 of Mus musculus (Mouse).